The chain runs to 348 residues: RNA 3'-terminal phosphate cyclase (348 aa).

Residues Gln101 and 286 to 289 contribute to the ATP site; that span reads HMAD. The Tele-AMP-histidine intermediate role is filled by His312.

The protein belongs to the RNA 3'-terminal cyclase family. Type 1 subfamily.

It is found in the cytoplasm. The enzyme catalyses a 3'-end 3'-phospho-ribonucleotide-RNA + ATP = a 3'-end 2',3'-cyclophospho-ribonucleotide-RNA + AMP + diphosphate. Catalyzes the conversion of 3'-phosphate to a 2',3'-cyclic phosphodiester at the end of RNA. The mechanism of action of the enzyme occurs in 3 steps: (A) adenylation of the enzyme by ATP; (B) transfer of adenylate to an RNA-N3'P to produce RNA-N3'PP5'A; (C) and attack of the adjacent 2'-hydroxyl on the 3'-phosphorus in the diester linkage to produce the cyclic end product. The biological role of this enzyme is unknown but it is likely to function in some aspects of cellular RNA processing. In Pyrobaculum aerophilum (strain ATCC 51768 / DSM 7523 / JCM 9630 / CIP 104966 / NBRC 100827 / IM2), this protein is RNA 3'-terminal phosphate cyclase.